A 116-amino-acid polypeptide reads, in one-letter code: Large ribosomal subunit protein bL19 (116 aa).

Belongs to the bacterial ribosomal protein bL19 family.

Its function is as follows. This protein is located at the 30S-50S ribosomal subunit interface and may play a role in the structure and function of the aminoacyl-tRNA binding site. The polypeptide is Large ribosomal subunit protein bL19 (rplS) (Geobacillus stearothermophilus (Bacillus stearothermophilus)).